The primary structure comprises 510 residues: Abscisic acid 8'-hydroxylase 2 (510 aa).

A helical membrane pass occupies residues 3–23 (FLLFFVFVTAAVLCFVVPAFL). Cys441 provides a ligand contact to heme.

This sequence belongs to the cytochrome P450 family. It depends on heme as a cofactor.

It is found in the membrane. It carries out the reaction 2-cis-(+)-abscisate + reduced [NADPH--hemoprotein reductase] + O2 = (+)-8'-hydroxyabscisate + oxidized [NADPH--hemoprotein reductase] + H2O + H(+). It functions in the pathway plant hormone degradation; abscisic acid degradation. Its function is as follows. Involved in the oxidative degradation of abscisic acid. The sequence is that of Abscisic acid 8'-hydroxylase 2 (CYP707A6) from Oryza sativa subsp. japonica (Rice).